A 251-amino-acid chain; its full sequence is Large ribosomal subunit protein uL4 (251 aa).

It belongs to the universal ribosomal protein uL4 family. As to quaternary structure, part of the 50S ribosomal subunit.

Functionally, one of the primary rRNA binding proteins, this protein initially binds near the 5'-end of the 23S rRNA. It is important during the early stages of 50S assembly. It makes multiple contacts with different domains of the 23S rRNA in the assembled 50S subunit and ribosome. Its function is as follows. Forms part of the polypeptide exit tunnel. The chain is Large ribosomal subunit protein uL4 from Methanothrix thermoacetophila (strain DSM 6194 / JCM 14653 / NBRC 101360 / PT) (Methanosaeta thermophila).